We begin with the raw amino-acid sequence, 319 residues long: Tetrahydromethanopterin S-methyltransferase subunit H (319 aa).

The protein belongs to the MtrH family. As to quaternary structure, the complex is composed of 8 subunits; MtrA, MtrB, MtrC, MtrD, MtrE, MtrF, MtrG and MtrH.

The enzyme catalyses 5-methyl-5,6,7,8-tetrahydromethanopterin + coenzyme M + 2 Na(+)(in) = 5,6,7,8-tetrahydromethanopterin + methyl-coenzyme M + 2 Na(+)(out). The protein operates within one-carbon metabolism; methanogenesis from CO(2); methyl-coenzyme M from 5,10-methylene-5,6,7,8-tetrahydromethanopterin: step 2/2. Part of a complex that catalyzes the formation of methyl-coenzyme M and tetrahydromethanopterin from coenzyme M and methyl-tetrahydromethanopterin. This is an energy-conserving, sodium-ion translocating step. MtrH catalyzes the transfer of the methyl group from methyl-tetrahydromethanopterin to the corrinoid prosthetic group of MtrA. This Methanococcus vannielii (strain ATCC 35089 / DSM 1224 / JCM 13029 / OCM 148 / SB) protein is Tetrahydromethanopterin S-methyltransferase subunit H.